A 260-amino-acid polypeptide reads, in one-letter code: Cytochrome c oxidase subunit 2 (260 aa).

Residues Met1–Asp41 are Mitochondrial intermembrane-facing. The chain crosses the membrane as a helical span at residues Ile42 to Trp62. Over His63–Thr86 the chain is Mitochondrial matrix. A helical membrane pass occupies residues Ile87–Met107. The Mitochondrial intermembrane portion of the chain corresponds to Asp108 to Ala260. Cu cation is bound by residues His187, Cys222, Glu224, Cys226, His230, and Met233. Position 224 (Glu224) interacts with Mg(2+).

It belongs to the cytochrome c oxidase subunit 2 family. Component of the cytochrome c oxidase (complex IV, CIV), a multisubunit enzyme composed of a catalytic core of 3 subunits and several supernumerary subunits. The complex exists as a monomer or a dimer and forms supercomplexes (SCs) in the inner mitochondrial membrane with ubiquinol-cytochrome c oxidoreductase (cytochrome b-c1 complex, complex III, CIII). Requires Cu cation as cofactor.

It localises to the mitochondrion inner membrane. The enzyme catalyses 4 Fe(II)-[cytochrome c] + O2 + 8 H(+)(in) = 4 Fe(III)-[cytochrome c] + 2 H2O + 4 H(+)(out). Its function is as follows. Component of the cytochrome c oxidase, the last enzyme in the mitochondrial electron transport chain which drives oxidative phosphorylation. The respiratory chain contains 3 multisubunit complexes succinate dehydrogenase (complex II, CII), ubiquinol-cytochrome c oxidoreductase (cytochrome b-c1 complex, complex III, CIII) and cytochrome c oxidase (complex IV, CIV), that cooperate to transfer electrons derived from NADH and succinate to molecular oxygen, creating an electrochemical gradient over the inner membrane that drives transmembrane transport and the ATP synthase. Cytochrome c oxidase is the component of the respiratory chain that catalyzes the reduction of oxygen to water. Electrons originating from reduced cytochrome c in the intermembrane space (IMS) are transferred via the dinuclear copper A center (CU(A)) of subunit 2 and heme A of subunit 1 to the active site in subunit 1, a binuclear center (BNC) formed by heme A3 and copper B (CU(B)). The BNC reduces molecular oxygen to 2 water molecules using 4 electrons from cytochrome c in the IMS and 4 protons from the mitochondrial matrix. This is Cytochrome c oxidase subunit 2 (COX2) from Arabidopsis thaliana (Mouse-ear cress).